A 561-amino-acid polypeptide reads, in one-letter code: uncharacterized protein (561 aa).

Helical transmembrane passes span 29-49 (FIFN…KKII) and 80-100 (FLFH…AVVI).

It is found in the cell membrane. This is an uncharacterized protein from Mycoplasma pneumoniae (strain ATCC 29342 / M129 / Subtype 1) (Mycoplasmoides pneumoniae).